The chain runs to 273 residues: Programmed cell death 1 ligand 2 (273 aa).

The first 19 residues, 1–19, serve as a signal peptide directing secretion; that stretch reads MIFLLLMLSLELQLHQIAA. Topologically, residues 20-220 are extracellular; that stretch reads LFTVTVPKEL…SQMEPRTHPT (201 aa). In terms of domain architecture, Ig-like V-type spans 21-118; sequence FTVTVPKELY…AWDYKYLTLK (98 aa). Asn-37, Asn-64, Asn-157, Asn-163, and Asn-189 each carry an N-linked (GlcNAc...) asparagine glycan. 2 disulfides stabilise this stretch: Cys-42/Cys-102 and Cys-143/Cys-192. An Ig-like C2-type domain is found at 122–203; it reads SYRKINTHIL…FWNTHVRELT (82 aa). A helical membrane pass occupies residues 221–241; it reads WLLHIFIPFCIIAFIFIATVI. The Cytoplasmic segment spans residues 242 to 273; sequence ALRKQLCQKLYSSKDTTKRPVTTTKREVNSAI.

The protein belongs to the immunoglobulin superfamily. BTN/MOG family. In terms of assembly, interacts with PDCD1. Highly expressed in heart, placenta, pancreas, lung and liver and weakly expressed in spleen, lymph nodes and thymus.

It is found in the secreted. It localises to the endomembrane system. Its subcellular location is the cell membrane. Its function is as follows. Involved in the costimulatory signal, essential for T-cell proliferation and IFNG production in a PDCD1-independent manner. Interaction with PDCD1 inhibits T-cell proliferation by blocking cell cycle progression and cytokine production. This chain is Programmed cell death 1 ligand 2 (PDCD1LG2), found in Homo sapiens (Human).